A 246-amino-acid polypeptide reads, in one-letter code: Orotidine 5'-phosphate decarboxylase (246 aa).

Substrate contacts are provided by residues Asp18, Lys39, 66-75, Thr130, Arg192, Gln201, Gly221, and Arg222; that span reads DLKFHDIPAT. The active-site Proton donor is the Lys68.

This sequence belongs to the OMP decarboxylase family. Type 1 subfamily. Homodimer.

It catalyses the reaction orotidine 5'-phosphate + H(+) = UMP + CO2. The protein operates within pyrimidine metabolism; UMP biosynthesis via de novo pathway; UMP from orotate: step 2/2. In terms of biological role, catalyzes the decarboxylation of orotidine 5'-monophosphate (OMP) to uridine 5'-monophosphate (UMP). The sequence is that of Orotidine 5'-phosphate decarboxylase from Parasynechococcus marenigrum (strain WH8102).